A 100-amino-acid chain; its full sequence is Large ribosomal subunit protein uL23 (100 aa).

It belongs to the universal ribosomal protein uL23 family. In terms of assembly, part of the 50S ribosomal subunit. Contacts protein L29, and trigger factor when it is bound to the ribosome.

In terms of biological role, one of the early assembly proteins it binds 23S rRNA. One of the proteins that surrounds the polypeptide exit tunnel on the outside of the ribosome. Forms the main docking site for trigger factor binding to the ribosome. The protein is Large ribosomal subunit protein uL23 of Colwellia psychrerythraea (strain 34H / ATCC BAA-681) (Vibrio psychroerythus).